The chain runs to 168 residues: Photosystem I assembly protein Ycf3 (168 aa).

TPR repeat units lie at residues 35–68 (AFTY…EIDP), 72–105 (SYIL…NPFL), and 120–153 (GEQA…TPGN).

Belongs to the Ycf3 family.

The protein localises to the plastid. It is found in the chloroplast thylakoid membrane. Essential for the assembly of the photosystem I (PSI) complex. May act as a chaperone-like factor to guide the assembly of the PSI subunits. In Amborella trichopoda, this protein is Photosystem I assembly protein Ycf3.